A 68-amino-acid polypeptide reads, in one-letter code: Pleurocidin (68 aa).

Positions 1–22 are cleaved as a signal peptide; sequence MKFTATFLMMAIFVLMVEPGEC. A propeptide spanning residues 48–68 is cleaved from the precursor; it reads GDKQELNKRAVDEDPNVIVFE.

This sequence belongs to the pleurocidin family. Goblet cells.

The protein resides in the secreted. The protein localises to the membrane. In terms of biological role, antimicrobial peptide with potent activity against Gram-positive and Gram-negative bacteria. Activity against E.coli and B.subtilis. Weaker activity against L.mucor, s.marcescens and P.aeruginosa. May play a role in innate host defense. This is Pleurocidin (ple1) from Pseudopleuronectes americanus (Winter flounder).